Consider the following 409-residue polypeptide: Peptidase T (409 aa).

His-78 is a binding site for Zn(2+). Asp-80 is an active-site residue. Asp-140 lines the Zn(2+) pocket. Glu-173 serves as the catalytic Proton acceptor. Positions 174, 196, and 379 each coordinate Zn(2+).

The protein belongs to the peptidase M20B family. It depends on Zn(2+) as a cofactor.

The protein localises to the cytoplasm. It carries out the reaction Release of the N-terminal residue from a tripeptide.. Its function is as follows. Cleaves the N-terminal amino acid of tripeptides. This chain is Peptidase T, found in Salmonella agona (strain SL483).